Consider the following 708-residue polypeptide: MNEVIQTTVAGRTLKVDCEKVGMLSNCGMLISYGDTVVLINANASDKPREGIDFFPLSIEYEERLYSVGKIPGGFIKREGKPSEKAILNARAIDRPLRPLFPKGYRNDVQVVCTVLSVDQDNLPNIVAMNGASLALCISSIPFITPVGSVAVGLVDGNFIINPNLEDREKSTLNLTVCATKERVMMVEAGACEVPEDIMYDAIIFGFEECKKIALFQEEVMKKYGKKKDEPDLYKVNEDLEEEVRGFAFDMIKDAMYIVDRDERNKVLKDIDEKLEEQFSEDYADNKSDIADVVYRVKKEIVRGMLLKEHRRVDGREFDEVRPISCEVGFLPRAHGTGLFTRGLTQVMTVVTLGSLGDVQILDGVGLEDSKRYMHHYNFPSYSTGEVRPLRGPGRREIGHGALAEKALEPLIPMEEQFPYTIRLVSEVLSSNGSTSQASICGSTLALLDAGVPIKRPAAGIAMGLVTSEDLSQEEILTDIQGLEDFFGDMDFKVGGTEKGITAIQFDTKIHGLSNKCIKETLEKARTARLYILEKMKQCIPEHRAEVSKYAPKTYIMSIPPDKIRDVIGSGGKVINKIIAETGVKIDIKEDGKIFVMSEDSEGAKKALKIIDDLTREILVGEIYLGKVTKITNFGAFVEIHKGKEGLVHISKLDFTRVNKVEDIVSVGDEILVKVIEIDNQGRINLSRKDAIKDSEKKEQNEKDVQKK.

2 residues coordinate Mg(2+): aspartate 485 and aspartate 491. Residues 552–611 (PKTYIMSIPPDKIRDVIGSGGKVINKIIAETGVKIDIKEDGKIFVMSEDSEGAKKALKII) form the KH domain. The region spanning 621 to 689 (GEIYLGKVTK…NQGRINLSRK (69 aa)) is the S1 motif domain. Residues 689–708 (KDAIKDSEKKEQNEKDVQKK) form a disordered region.

It belongs to the polyribonucleotide nucleotidyltransferase family. It depends on Mg(2+) as a cofactor.

It is found in the cytoplasm. The enzyme catalyses RNA(n+1) + phosphate = RNA(n) + a ribonucleoside 5'-diphosphate. Functionally, involved in mRNA degradation. Catalyzes the phosphorolysis of single-stranded polyribonucleotides processively in the 3'- to 5'-direction. In Clostridium kluyveri (strain NBRC 12016), this protein is Polyribonucleotide nucleotidyltransferase.